We begin with the raw amino-acid sequence, 126 residues long: LTPIISVQFKPPPTRDFPVVVEKGFEKRAHYFRGFINSGHAQIQKGQTHHHGHMTFAWRQGLDTDTIRHRILNVHIGPCIYSVPPPLDRSHESPEEFFPPQNRNRGGGPKAQIQRHPPEALEKTTH.

Residues 83–126 (VPPPLDRSHESPEEFFPPQNRNRGGGPKAQIQRHPPEALEKTTH) are disordered. Residues 116-126 (HPPEALEKTTH) are compositionally biased toward basic and acidic residues.

This is an uncharacterized protein from Galliformes (FAdV-1).